The primary structure comprises 290 residues: 4-hydroxybenzoate octaprenyltransferase (290 aa).

Transmembrane regions (helical) follow at residues 38-58, 99-119, 141-161, 213-233, 238-258, and 268-288; these read LAGM…GVFF, LFGA…SMTI, LPQL…FTAV, LIIG…GWQL, IYYL…KLIV, and AFLN…LSLL.

Belongs to the UbiA prenyltransferase family. Requires Mg(2+) as cofactor.

It is found in the cell inner membrane. The catalysed reaction is all-trans-octaprenyl diphosphate + 4-hydroxybenzoate = 4-hydroxy-3-(all-trans-octaprenyl)benzoate + diphosphate. It participates in cofactor biosynthesis; ubiquinone biosynthesis. Its function is as follows. Catalyzes the prenylation of para-hydroxybenzoate (PHB) with an all-trans polyprenyl group. Mediates the second step in the final reaction sequence of ubiquinone-8 (UQ-8) biosynthesis, which is the condensation of the polyisoprenoid side chain with PHB, generating the first membrane-bound Q intermediate 3-octaprenyl-4-hydroxybenzoate. This Sodalis glossinidius (strain morsitans) protein is 4-hydroxybenzoate octaprenyltransferase.